Consider the following 264-residue polypeptide: 3-methyl-2-oxobutanoate hydroxymethyltransferase (264 aa).

D45 and D84 together coordinate Mg(2+). Residues 45 to 46, D84, and K112 each bind 3-methyl-2-oxobutanoate; that span reads DS. E114 serves as a coordination point for Mg(2+). Catalysis depends on E181, which acts as the Proton acceptor.

The protein belongs to the PanB family. Homodecamer; pentamer of dimers. Mg(2+) is required as a cofactor.

The protein resides in the cytoplasm. It carries out the reaction 3-methyl-2-oxobutanoate + (6R)-5,10-methylene-5,6,7,8-tetrahydrofolate + H2O = 2-dehydropantoate + (6S)-5,6,7,8-tetrahydrofolate. The protein operates within cofactor biosynthesis; (R)-pantothenate biosynthesis; (R)-pantoate from 3-methyl-2-oxobutanoate: step 1/2. In terms of biological role, catalyzes the reversible reaction in which hydroxymethyl group from 5,10-methylenetetrahydrofolate is transferred onto alpha-ketoisovalerate to form ketopantoate. In Alteromonas mediterranea (strain DSM 17117 / CIP 110805 / LMG 28347 / Deep ecotype), this protein is 3-methyl-2-oxobutanoate hydroxymethyltransferase.